We begin with the raw amino-acid sequence, 184 residues long: Orotate phosphoribosyltransferase (184 aa).

Residues arginine 99, lysine 100, lysine 103, histidine 105, and 125 to 133 (EDTTTTGNS) contribute to the 5-phospho-alpha-D-ribose 1-diphosphate site. Orotate contacts are provided by threonine 129 and arginine 157.

It belongs to the purine/pyrimidine phosphoribosyltransferase family. PyrE subfamily. As to quaternary structure, homodimer. Mg(2+) is required as a cofactor.

The enzyme catalyses orotidine 5'-phosphate + diphosphate = orotate + 5-phospho-alpha-D-ribose 1-diphosphate. Its pathway is pyrimidine metabolism; UMP biosynthesis via de novo pathway; UMP from orotate: step 1/2. Catalyzes the transfer of a ribosyl phosphate group from 5-phosphoribose 1-diphosphate to orotate, leading to the formation of orotidine monophosphate (OMP). In Corynebacterium glutamicum (strain ATCC 13032 / DSM 20300 / JCM 1318 / BCRC 11384 / CCUG 27702 / LMG 3730 / NBRC 12168 / NCIMB 10025 / NRRL B-2784 / 534), this protein is Orotate phosphoribosyltransferase.